The following is a 221-amino-acid chain: ATP synthase subunit a 1 (221 aa).

Helical transmembrane passes span 20–40 (LTIV…ALIT), 78–98 (YLPF…CTVI), 108–128 (LSTT…FGIA), 174–194 (MILV…MNIL), and 196–216 (LLTG…YIAA).

This sequence belongs to the ATPase A chain family. As to quaternary structure, F-type ATPases have 2 components, CF(1) - the catalytic core - and CF(0) - the membrane proton channel. CF(1) has five subunits: alpha(3), beta(3), gamma(1), delta(1), epsilon(1). CF(0) has four main subunits: a, b, b' and c.

The protein resides in the cell inner membrane. Functionally, key component of the proton channel; it plays a direct role in the translocation of protons across the membrane. This chain is ATP synthase subunit a 1, found in Chlorobaculum tepidum (strain ATCC 49652 / DSM 12025 / NBRC 103806 / TLS) (Chlorobium tepidum).